Consider the following 508-residue polypeptide: Flavonoid 3'-monooxygenase CYP75B137 (508 aa).

A helical membrane pass occupies residues 2–22 (LTFFFLWISTLLLSSFIVYLL). Residue C445 coordinates heme.

The protein belongs to the cytochrome P450 family. The cofactor is heme. As to expression, expressed in young cromes.

It is found in the membrane. The catalysed reaction is a 3'-unsubstituted flavone + reduced [NADPH--hemoprotein reductase] + O2 = a 3'-hydroxyflavone + oxidized [NADPH--hemoprotein reductase] + H2O + H(+). It carries out the reaction (2S)-naringenin + reduced [NADPH--hemoprotein reductase] + O2 = (S)-eriodictyol + oxidized [NADPH--hemoprotein reductase] + H2O + H(+). The enzyme catalyses (2R,3R)-dihydrokaempferol + reduced [NADPH--hemoprotein reductase] + O2 = (2R,3R)-dihydroquercetin + oxidized [NADPH--hemoprotein reductase] + H2O + H(+). It catalyses the reaction kaempferol + reduced [NADPH--hemoprotein reductase] + O2 = quercetin + oxidized [NADPH--hemoprotein reductase] + H2O + H(+). Its pathway is flavonoid metabolism. Flavonoid 3'-hydroxylase that catalyzes the 3'-hydroxylation of flavanones, dihydroflavonols and flavonols. Converts narigenin to eriodictyol, dihydrokaempferol to dihydroquercetin and kaempferol to quercetin. The chain is Flavonoid 3'-monooxygenase CYP75B137 from Crocosmia x crocosmiiflora (Montbretia).